Reading from the N-terminus, the 1065-residue chain is Putative guanine nucleotide-exchange factor SED4 (1065 aa).

Topologically, residues 1-346 are cytoplasmic; the sequence is MSGNSANYDV…SSSILRNIWK (346 aa). S65 is modified (phosphoserine). WD repeat units follow at residues 259–298 and 302–341; these read FDLN…LVQL and VHES…SSIL. The chain crosses the membrane as a helical; Signal-anchor for type II membrane protein span at residues 347–365; it reads FFLNFVLLVVLAGAIQLGY. The Lumenal segment spans residues 366-1065; it reads KHNVHGFIYK…VNYAGLHDEL (700 aa). Residue N388 is glycosylated (N-linked (GlcNAc...) asparagine). Disordered regions lie at residues 458–477, 482–520, and 551–625; these read TSAD…SSSF, VTNE…SESI, and QSES…SFLD. Positions 465–476 are enriched in low complexity; the sequence is SASSSSSSSSSS. The span at 482 to 495 shows a compositional bias: polar residues; it reads VTNEPIVSSPTSEI. The span at 568 to 621 shows a compositional bias: low complexity; the sequence is STESPSLSHMPSSSSSSLSLSSSLTTSPTTALSTSTATAVTTTQTNPTNDAANT. N620 carries an N-linked (GlcNAc...) asparagine glycan. 4 consecutive repeat copies span residues 824–833, 834–843, 844–853, and 854–863. A 4 X 10 AA tandem repeats region spans residues 824–863; the sequence is IDNSEYTSVLADNLEPTSVLADNSEPTSVLADSSEPTSVF. An N-linked (GlcNAc...) asparagine glycan is attached at N1039. A Prevents secretion from ER motif is present at residues 1062–1065; the sequence is HDEL.

Belongs to the WD repeat SEC12 family.

The protein localises to the endoplasmic reticulum membrane. Its subcellular location is the golgi apparatus membrane. Putative guanine nucleotide-exchange factor (GEF) involved in the formation or budding of transport vesicles from the ER. Positive regulator of SAR1 probably through inhibition of the GTPase activation by SEC23. This Saccharomyces cerevisiae (strain ATCC 204508 / S288c) (Baker's yeast) protein is Putative guanine nucleotide-exchange factor SED4 (SED4).